The chain runs to 363 residues: Inactive CLIP domain-containing serine protease A8 (363 aa).

An N-terminal signal peptide occupies residues 1-25; that stretch reads MPSWWCCCCLVVLLYAQRMIVPSSA. The Clip domain maps to 33 to 82; it reads LQECPGGFCSPKYLCPNGTYNEANAQNQEIIMLRFGEEDVCQDYMQVCCS. Intrachain disulfides connect Cys36–Cys80, Cys41–Cys73, and Cys47–Cys81. 4 N-linked (GlcNAc...) asparagine glycosylation sites follow: Asn49, Asn83, Asn117, and Asn166. Positions 114 to 360 constitute a Peptidase S1 domain; sequence VEGNRTYAQY…FVTWINATIE (247 aa). Intrachain disulfides connect Cys245/Cys317, Cys276/Cys297, and Cys307/Cys336. N-linked (GlcNAc...) asparagine glycosylation is found at Asn319 and Asn356.

Belongs to the peptidase S1 family. CLIP subfamily. Heterodimer of a light chain and a heavy chain; disulfide-linked. In terms of processing, secreted as a full-length protein. Proteolytically cleaved into two chains which remain covalently linked. Cleavage is induced by Gram-positive or Gram-negative bacteria infection.

The protein localises to the secreted. Functionally, inactive serine protease which plays an essential role in the innate immune response against bacteria, fungi and protozoa infection by activating the melanization cascade. In the melanization cascade, acts downstream of TEP1 and SPCLIP1 to promote CLIPA28 and CLIPC9 proteolytic cleavage and CLIPC9 recruitment to microbial surfaces. In the resistant strain L3-5, required for the melanization of killed parasite P.berghei ookinetes which results in their clearance. In the susceptible strain G3, appears to be dispensable for ookinete elimination which occurs by lysis. Required for the melanization of Gram-positive and Gram-negative bacteria. During the late stage of fungus B.bassiana-mediated infection, required for the initiation of hyphae melanization by promoting prophenoloxidase PPO activation. This Anopheles gambiae (African malaria mosquito) protein is Inactive CLIP domain-containing serine protease A8.